Reading from the N-terminus, the 2173-residue chain is Mediator of RNA polymerase II transcription subunit 12 (2173 aa).

8 disordered regions span residues 1 to 34, 318 to 345, 630 to 718, 784 to 804, 1380 to 1404, 1443 to 1467, 1737 to 1780, and 2020 to 2068; these read MAAFGVLSYEHRPLKRPRLGPPDVYPQDPKQKED, GGHQAHGISAQQGNALPPTPTSQPAGGN, ASNS…KGMD, KSTAETGGEEGQKRKRSKPEA, MNSSNPSWNGSAVSGSSVSNSNSAS, ELEKGQHLGPSSRKERDRQKQKSMS, EEEP…VKQE, and QGIH…FRPQ. Residues 702–717 are compositionally biased toward basic and acidic residues; sequence QAQEQESKSTAKDKGM. The segment covering 1389–1404 has biased composition (low complexity); the sequence is GSAVSGSSVSNSNSAS. 2 stretches are compositionally biased toward basic and acidic residues: residues 1443 to 1462 and 1747 to 1759; these read ELEKGQHLGPSSRKERDRQK and EPDKKLDTAKVEK. The segment covering 2034-2057 has biased composition (low complexity); the sequence is QQQQQQQQQQQQQQQQQQVHQQQQ.

It belongs to the Mediator complex subunit 12 family. In terms of assembly, component of the Mediator complex.

It localises to the nucleus. In terms of biological role, component of the Mediator complex, a coactivator involved in regulated gene transcription of nearly all RNA polymerase II-dependent genes. Mediator functions as a bridge to convey information from gene-specific regulatory proteins to the basal RNA polymerase II transcription machinery. Mediator is recruited to promoters by direct interactions with regulatory proteins and serves as a scaffold for the assembly of a functional preinitiation complex with RNA polymerase II and the general transcription factors. Required for development of the body axis, brain, ear, kidney, forelimb and neural crest and for pigmentation. Acts as a coactivator for sox9a and/or sox9b promoting the expression of several neuronal determination genes. The chain is Mediator of RNA polymerase II transcription subunit 12 (med12) from Danio rerio (Zebrafish).